Reading from the N-terminus, the 619-residue chain is Alpha-(1,6)-fucosyltransferase (619 aa).

Residues 1–17 (MLLVRQLFGASANSWAR) are Cytoplasmic-facing. Residues 18–38 (ALIIFVLAWIGLVYVFVVKLT) traverse the membrane as a helical; Signal-anchor for type II membrane protein segment. Over 39–619 (NTQGQQAAGE…TAKLPLYAGI (581 aa)) the chain is Lumenal. Cystine bridges form between cysteine 253-cysteine 315, cysteine 261-cysteine 279, and cysteine 267-cysteine 271. The GT23 domain occupies 255–539 (NARKLVCKLN…PDAAHRFKSL (285 aa)). Residues 345–351 (PRPPYLP) carry the SH3-binding motif. The tract at residues 411 to 412 (RR) is important for donor substrate binding. Cysteine 511 and cysteine 518 are oxidised to a cystine. The region spanning 548–609 (QNAHNRRVVI…PSFKVEEKVD (62 aa)) is the SH3 domain.

This sequence belongs to the glycosyltransferase 23 family. Requires Mn(2+) as cofactor. The cofactor is Mg(2+).

The protein localises to the golgi apparatus. The protein resides in the golgi stack membrane. The enzyme catalyses N(4)-{beta-D-GlcNAc-(1-&gt;2)-alpha-D-Man-(1-&gt;3)-[beta-D-GlcNAc-(1-&gt;2)-alpha-D-Man-(1-&gt;6)]-beta-D-Man-(1-&gt;4)-beta-D-GlcNAc-(1-&gt;4)-beta-D-GlcNAc}-L-asparaginyl-[protein] + GDP-beta-L-fucose = an N(4)-{beta-D-GlcNAc-(1-&gt;2)-alpha-D-Man-(1-&gt;3)-[beta-D-GlcNAc-(1-&gt;2)-alpha-D-Man-(1-&gt;6)]-beta-D-Man-(1-&gt;4)-beta-D-GlcNAc-(1-&gt;4)-[alpha-L-Fuc-(1-&gt;6)]-beta-D-GlcNAc}-L-asparaginyl-[protein] + GDP + H(+). Its pathway is protein modification; protein glycosylation. Catalyzes the addition of fucose in alpha 1-6 linkage to the first GlcNAc residue, next to the peptide chains in N-glycans. The addition is prevented if the GlcNAc residue is already fucosylated. This is Alpha-(1,6)-fucosyltransferase (FucT6) from Drosophila melanogaster (Fruit fly).